A 374-amino-acid polypeptide reads, in one-letter code: C-C chemokine receptor type 2 (374 aa).

The Extracellular segment spans residues 1–42 (MLSTSRSRFIRNTNESGEEVTTFFDYDYGAPCHKFDVKQIGA). Asn14 is a glycosylation site (N-linked (GlcNAc...) asparagine). A Sulfotyrosine modification is found at Tyr26. Residues 43–70 (QLLPPLYSLVFIFGFVGNMLVVLILINC) form a helical membrane-spanning segment. The Cytoplasmic portion of the chain corresponds to 71 to 80 (KKLKCLTDIY). A helical membrane pass occupies residues 81–100 (LLNLAISDLLFLITLPLWAH). The Extracellular portion of the chain corresponds to 101-114 (SAANEWVFGNAMCK). Cys113 and Cys190 are oxidised to a cystine. Residues 115–136 (LFTGLYHIGYFGGIFFIILLTI) form a helical membrane-spanning segment. The Cytoplasmic segment spans residues 137 to 153 (DRYLAIVHAVFALKART). Position 139 is a phosphotyrosine; by JAK2 (Tyr139). A helical membrane pass occupies residues 154-178 (VTFGVVTSVITWLVAVFASVPGIIF). Topologically, residues 179–206 (TKCQKEDSVYVCGPYFPRGWNNFHTIMR) are extracellular. Residues 207–226 (NILGLVLPLLIMVICYSGIL) traverse the membrane as a helical segment. At 227–243 (KTLLRCRNEKKRHRAVR) the chain is on the cytoplasmic side. Residues 244–268 (VIFTIMIVYFLFWTPYNIVILLNTF) traverse the membrane as a helical segment. The Extracellular portion of the chain corresponds to 269-285 (QEFFGLSNCESTSQLDQ). Residues 286 to 309 (ATQVTETLGMTHCCINPIIYAFVG) form a helical membrane-spanning segment. Residues 310-374 (EKFRSLFHIA…EASLQDKEGA (65 aa)) lie on the Cytoplasmic side of the membrane. Positions 348 to 374 (QGLLDGRGKGKSIGRAPEASLQDKEGA) are disordered.

This sequence belongs to the G-protein coupled receptor 1 family. Interacts with ARRB1. Interacts (via extracellular N-terminal region) with beta-defensin DEFB106A/DEFB106B; this interaction may preferentially require specific tyrosine sulfation on CCR2. Interacts with NUP85; the interaction is required for CCR2 clusters formation on the cell membrane and CCR2 signaling. As to quaternary structure, (Microbial infection) Binds to HIV-1 Tat. N-glycosylated. Post-translationally, sulfation increases the affinity for both monomeric and dimeric CCL2 with stronger binding to the monomeric form. Binding of sulfated CCR2 to CCL2 promotes conversion of CCL2 from dimer to monomer. As to expression, expressed by monocytes and IL2-activated NK cells. Abundantly expressed on CD14+/CD16- monocytes and weakly on CD14+/CD16+ monocytes, type 2 dendritic cells (DCs) and plasmacytoid DCs (at protein level).

It is found in the cell membrane. Key functional receptor for CCL2 but can also bind CCL7, and CCL12. Also transduces signaling mediated by CCL13. Its binding with CCL2 on monocytes and macrophages mediates chemotaxis and migration induction through the activation of the PI3K cascade, the small G protein Rac and lamellipodium protrusion. Also acts as a receptor for the beta-defensin DEFB106A/DEFB106B. Regulates the expression of T-cell inflammatory cytokines and T-cell differentiation, promoting the differentiation of T-cells into T-helper 17 cells (Th17) during inflammation. Facilitates the export of mature thymocytes by enhancing directional movement of thymocytes to sphingosine-1-phosphate stimulation and up-regulation of S1P1R expression; signals through the JAK-STAT pathway to regulate FOXO1 activity leading to an increased expression of S1P1R. Plays an important role in mediating peripheral nerve injury-induced neuropathic pain. Increases NMDA-mediated synaptic transmission in both dopamine D1 and D2 receptor-containing neurons, which may be caused by MAPK/ERK-dependent phosphorylation of GRIN2B/NMDAR2B. Mediates the recruitment of macrophages and monocytes to the injury site following brain injury. Functionally, (Microbial infection) Alternative coreceptor with CD4 for HIV-1 infection. This chain is C-C chemokine receptor type 2 (CCR2), found in Homo sapiens (Human).